The chain runs to 422 residues: NADH-quinone oxidoreductase subunit F (422 aa).

The disordered stretch occupies residues 1-26 (MLKEEDKIFTNLHGQQSHDLKSSKKR). Residues 16 to 26 (QSHDLKSSKKR) show a composition bias toward basic and acidic residues. Residue 54–63 (GRGGAGFSTG) coordinates NAD(+). 166 to 213 (GAGAYICGEETALLESLEGKKGMPRLKPPFPAGFGLYGCPTTINNVES) contributes to the FMN binding site. 4 residues coordinate [4Fe-4S] cluster: cysteine 344, cysteine 347, cysteine 350, and cysteine 390.

This sequence belongs to the complex I 51 kDa subunit family. FMN is required as a cofactor. Requires [4Fe-4S] cluster as cofactor.

It carries out the reaction a quinone + NADH + 5 H(+)(in) = a quinol + NAD(+) + 4 H(+)(out). Functionally, NDH-1 shuttles electrons from NADH, via FMN and iron-sulfur (Fe-S) centers, to quinones in the respiratory chain. Couples the redox reaction to proton translocation (for every two electrons transferred, four hydrogen ions are translocated across the cytoplasmic membrane), and thus conserves the redox energy in a proton gradient. In Rickettsia felis (strain ATCC VR-1525 / URRWXCal2) (Rickettsia azadi), this protein is NADH-quinone oxidoreductase subunit F (nuoF).